The primary structure comprises 360 residues: Type 2 DNA topoisomerase 6 subunit A (360 aa).

Residues 3–140 enclose the Topo IIA-type catalytic domain; the sequence is EIERRCLRAL…FHIRPEEDGA (138 aa). Tyrosine 97 serves as the catalytic O-(5'-phospho-DNA)-tyrosine intermediate. Positions 193 and 245 each coordinate Mg(2+).

This sequence belongs to the TOP6A family. As to quaternary structure, homodimer. Heterotetramer of two Top6A and two Top6B chains. Mg(2+) serves as cofactor.

The catalysed reaction is ATP-dependent breakage, passage and rejoining of double-stranded DNA.. Relaxes both positive and negative superturns and exhibits a strong decatenase activity. The sequence is that of Type 2 DNA topoisomerase 6 subunit A from Archaeoglobus fulgidus (strain ATCC 49558 / DSM 4304 / JCM 9628 / NBRC 100126 / VC-16).